Reading from the N-terminus, the 633-residue chain is Putative serine/threonine-protein kinase L232 (633 aa).

In terms of domain architecture, Protein kinase spans 10 to 314 (YTIVDKLSEG…QSRKLFYEIL (305 aa)). ATP contacts are provided by residues 16-24 (LSEGTYGIV) and lysine 39. The active-site Proton acceptor is the aspartate 133.

It belongs to the protein kinase superfamily. Ser/Thr protein kinase family.

The catalysed reaction is L-seryl-[protein] + ATP = O-phospho-L-seryl-[protein] + ADP + H(+). The enzyme catalyses L-threonyl-[protein] + ATP = O-phospho-L-threonyl-[protein] + ADP + H(+). The sequence is that of Putative serine/threonine-protein kinase L232 from Acanthamoeba polyphaga mimivirus (APMV).